A 278-amino-acid chain; its full sequence is Checkpoint protein HUS1B (278 aa).

Belongs to the HUS1 family. As to quaternary structure, interacts with RAD1 and RAD9B. Expressed strongly in testis, less in spleen, thymus, prostate, colon and leukocytes.

This Homo sapiens (Human) protein is Checkpoint protein HUS1B (HUS1B).